The chain runs to 468 residues: Bifunctional protein GlmU (468 aa).

Residues M1–R233 form a pyrophosphorylase region. UDP-N-acetyl-alpha-D-glucosamine contacts are provided by residues L15–G18, K29, Q79, and G84–T85. Position 109 (D109) interacts with Mg(2+). UDP-N-acetyl-alpha-D-glucosamine-binding residues include G146, E159, N174, and N231. Residue N231 coordinates Mg(2+). The linker stretch occupies residues S234–E254. Residues G255 to G468 are N-acetyltransferase. Residues R336 and K354 each contribute to the UDP-N-acetyl-alpha-D-glucosamine site. H366 serves as the catalytic Proton acceptor. Y369 and N380 together coordinate UDP-N-acetyl-alpha-D-glucosamine. Acetyl-CoA contacts are provided by residues A383, N389–Y390, and A426.

This sequence in the N-terminal section; belongs to the N-acetylglucosamine-1-phosphate uridyltransferase family. In the C-terminal section; belongs to the transferase hexapeptide repeat family. Homotrimer. Mg(2+) is required as a cofactor.

Its subcellular location is the cytoplasm. It carries out the reaction alpha-D-glucosamine 1-phosphate + acetyl-CoA = N-acetyl-alpha-D-glucosamine 1-phosphate + CoA + H(+). The enzyme catalyses N-acetyl-alpha-D-glucosamine 1-phosphate + UTP + H(+) = UDP-N-acetyl-alpha-D-glucosamine + diphosphate. It participates in nucleotide-sugar biosynthesis; UDP-N-acetyl-alpha-D-glucosamine biosynthesis; N-acetyl-alpha-D-glucosamine 1-phosphate from alpha-D-glucosamine 6-phosphate (route II): step 2/2. Its pathway is nucleotide-sugar biosynthesis; UDP-N-acetyl-alpha-D-glucosamine biosynthesis; UDP-N-acetyl-alpha-D-glucosamine from N-acetyl-alpha-D-glucosamine 1-phosphate: step 1/1. It functions in the pathway bacterial outer membrane biogenesis; LPS lipid A biosynthesis. Functionally, catalyzes the last two sequential reactions in the de novo biosynthetic pathway for UDP-N-acetylglucosamine (UDP-GlcNAc). The C-terminal domain catalyzes the transfer of acetyl group from acetyl coenzyme A to glucosamine-1-phosphate (GlcN-1-P) to produce N-acetylglucosamine-1-phosphate (GlcNAc-1-P), which is converted into UDP-GlcNAc by the transfer of uridine 5-monophosphate (from uridine 5-triphosphate), a reaction catalyzed by the N-terminal domain. This is Bifunctional protein GlmU from Rubrobacter xylanophilus (strain DSM 9941 / JCM 11954 / NBRC 16129 / PRD-1).